The following is a 280-amino-acid chain: MNAAAPRAFVVGWPIAHSRSPIIHNYWLHQLGLAGRYEAVAVAPPDFADFAQNLAARGFVGGNVTLPHKQNAFGLVAEATHSARRLEAVNTLWIEDGRLYGDNTDSEGFLCALDEAAPGWEAIPGEAVVLGAGGAARAIVAALIDRGRSVVLANRTRARAEAIAAHFGDAPKVIDWRDLPAALKTAGLLVNTTSLGMKGQPPLDLDVALLPQDAVVHDIVYFPLETALLRAARARGLRVAPGLGMLLHQAAPAFARWFATRPKVTPELRRLVEADIEKAL.

Residues 18–20 and threonine 65 contribute to the shikimate site; that span reads SRS. The active-site Proton acceptor is the lysine 69. Positions 90 and 105 each coordinate shikimate. NADP(+)-binding positions include 131 to 135, 154 to 159, and isoleucine 219; these read GAGGA and NRTRAR. Tyrosine 221 contributes to the shikimate binding site. Glycine 242 is a binding site for NADP(+).

The protein belongs to the shikimate dehydrogenase family. Homodimer.

It carries out the reaction shikimate + NADP(+) = 3-dehydroshikimate + NADPH + H(+). It participates in metabolic intermediate biosynthesis; chorismate biosynthesis; chorismate from D-erythrose 4-phosphate and phosphoenolpyruvate: step 4/7. In terms of biological role, involved in the biosynthesis of the chorismate, which leads to the biosynthesis of aromatic amino acids. Catalyzes the reversible NADPH linked reduction of 3-dehydroshikimate (DHSA) to yield shikimate (SA). This Methylocella silvestris (strain DSM 15510 / CIP 108128 / LMG 27833 / NCIMB 13906 / BL2) protein is Shikimate dehydrogenase (NADP(+)).